The primary structure comprises 344 residues: Acireductone dioxygenase (344 aa).

Fe(2+) contacts are provided by H92, H94, E98, and H137. H92, H94, E98, and H137 together coordinate Ni(2+).

Belongs to the acireductone dioxygenase (ARD) family. The cofactor is Fe(2+). Requires Ni(2+) as cofactor.

The protein localises to the cytoplasm. The protein resides in the nucleus. The enzyme catalyses 1,2-dihydroxy-5-(methylsulfanyl)pent-1-en-3-one + O2 = 4-methylsulfanyl-2-oxobutanoate + formate + 2 H(+). It catalyses the reaction 1,2-dihydroxy-5-(methylsulfanyl)pent-1-en-3-one + O2 = 3-(methylsulfanyl)propanoate + CO + formate + 2 H(+). Its pathway is amino-acid biosynthesis; L-methionine biosynthesis via salvage pathway; L-methionine from S-methyl-5-thio-alpha-D-ribose 1-phosphate: step 5/6. Its function is as follows. Catalyzes 2 different reactions between oxygen and the acireductone 1,2-dihydroxy-3-keto-5-methylthiopentene (DHK-MTPene) depending upon the metal bound in the active site. Fe-containing acireductone dioxygenase (Fe-ARD) produces formate and 2-keto-4-methylthiobutyrate (KMTB), the alpha-ketoacid precursor of methionine in the methionine recycle pathway. Ni-containing acireductone dioxygenase (Ni-ARD) produces methylthiopropionate, carbon monoxide and formate, and does not lie on the methionine recycle pathway. This Leishmania infantum protein is Acireductone dioxygenase.